Reading from the N-terminus, the 270-residue chain is Bis(5'-nucleosyl)-tetraphosphatase, symmetrical (270 aa).

Belongs to the Ap4A hydrolase family.

It carries out the reaction P(1),P(4)-bis(5'-adenosyl) tetraphosphate + H2O = 2 ADP + 2 H(+). In terms of biological role, hydrolyzes diadenosine 5',5'''-P1,P4-tetraphosphate to yield ADP. The polypeptide is Bis(5'-nucleosyl)-tetraphosphatase, symmetrical (Thioalkalivibrio sulfidiphilus (strain HL-EbGR7)).